The following is a 1030-amino-acid chain: Beta-galactosidase (1030 aa).

2 residues coordinate substrate: asparagine 99 and aspartate 197. Aspartate 197 lines the Na(+) pocket. Mg(2+)-binding residues include glutamate 411, histidine 413, and glutamate 456. Substrate contacts are provided by residues glutamate 456 and glutamate 532–histidine 535. The active-site Proton donor is glutamate 456. The active-site Nucleophile is glutamate 532. Asparagine 592 contributes to the Mg(2+) binding site. Residues phenylalanine 596 and asparagine 599 each coordinate Na(+). Residues asparagine 599 and tryptophan 1004 each contribute to the substrate site.

It belongs to the glycosyl hydrolase 2 family. In terms of assembly, homotetramer. Mg(2+) serves as cofactor. Na(+) is required as a cofactor.

The catalysed reaction is Hydrolysis of terminal non-reducing beta-D-galactose residues in beta-D-galactosides.. This is Beta-galactosidase from Photobacterium profundum (strain SS9).